Consider the following 178-residue polypeptide: Hypoxanthine-guanine phosphoribosyltransferase (178 aa).

Residues Lys-46 and Gly-47 each contribute to the diphosphate site. Mg(2+) is bound at residue Asp-103. The active-site Proton acceptor is Asp-106. Residues Lys-134, 155 to 156 (FL), and Asp-162 contribute to the GMP site. Residue Arg-168 coordinates diphosphate.

This sequence belongs to the purine/pyrimidine phosphoribosyltransferase family. Requires Mg(2+) as cofactor.

Its subcellular location is the cytoplasm. The catalysed reaction is IMP + diphosphate = hypoxanthine + 5-phospho-alpha-D-ribose 1-diphosphate. It carries out the reaction GMP + diphosphate = guanine + 5-phospho-alpha-D-ribose 1-diphosphate. It functions in the pathway purine metabolism; IMP biosynthesis via salvage pathway; IMP from hypoxanthine: step 1/1. It participates in purine metabolism; GMP biosynthesis via salvage pathway; GMP from guanine: step 1/1. Functionally, purine salvage pathway enzyme that catalyzes the transfer of the ribosyl-5-phosphate group from 5-phospho-alpha-D-ribose 1-diphosphate (PRPP) to the N9 position of the 6-oxopurines hypoxanthine and guanine to form the corresponding ribonucleotides IMP (inosine 5'-monophosphate) and GMP (guanosine 5'-monophosphate), with the release of PPi. This is Hypoxanthine-guanine phosphoribosyltransferase (hpt) from Aquifex aeolicus (strain VF5).